We begin with the raw amino-acid sequence, 886 residues long: Protein translocase subunit SecA (886 aa).

ATP is bound by residues glutamine 81, 99–103 (GEGKT), and aspartate 489.

The protein belongs to the SecA family.

It localises to the plastid. It is found in the chloroplast stroma. The protein localises to the chloroplast thylakoid membrane. The enzyme catalyses ATP + H2O + cellular proteinSide 1 = ADP + phosphate + cellular proteinSide 2.. Has a central role in coupling the hydrolysis of ATP to the transfer of proteins across the thylakoid membrane. The sequence is that of Protein translocase subunit SecA from Phaeodactylum tricornutum (strain CCAP 1055/1).